Consider the following 449-residue polypeptide: Kynurenine 3-monooxygenase (449 aa).

It belongs to the aromatic-ring hydroxylase family. KMO subfamily. It depends on FAD as a cofactor.

It carries out the reaction L-kynurenine + NADPH + O2 + H(+) = 3-hydroxy-L-kynurenine + NADP(+) + H2O. Its pathway is cofactor biosynthesis; NAD(+) biosynthesis; quinolinate from L-kynurenine: step 1/3. Functionally, catalyzes the hydroxylation of L-kynurenine (L-Kyn) to form 3-hydroxy-L-kynurenine (L-3OHKyn). Required for synthesis of quinolinic acid. In Cytophaga hutchinsonii (strain ATCC 33406 / DSM 1761 / CIP 103989 / NBRC 15051 / NCIMB 9469 / D465), this protein is Kynurenine 3-monooxygenase.